The primary structure comprises 249 residues: Methylthioribulose-1-phosphate dehydratase (249 aa).

Zn(2+) is bound by residues histidine 103 and histidine 105.

It belongs to the aldolase class II family. MtnB subfamily. Requires Zn(2+) as cofactor.

It catalyses the reaction 5-(methylsulfanyl)-D-ribulose 1-phosphate = 5-methylsulfanyl-2,3-dioxopentyl phosphate + H2O. It participates in amino-acid biosynthesis; L-methionine biosynthesis via salvage pathway; L-methionine from S-methyl-5-thio-alpha-D-ribose 1-phosphate: step 2/6. In terms of biological role, catalyzes the dehydration of methylthioribulose-1-phosphate (MTRu-1-P) into 2,3-diketo-5-methylthiopentyl-1-phosphate (DK-MTP-1-P). The sequence is that of Methylthioribulose-1-phosphate dehydratase from Leptospira interrogans serogroup Icterohaemorrhagiae serovar copenhageni (strain Fiocruz L1-130).